Here is a 569-residue protein sequence, read N- to C-terminus: Proline--tRNA ligase (569 aa).

It belongs to the class-II aminoacyl-tRNA synthetase family. ProS type 1 subfamily. In terms of assembly, homodimer.

Its subcellular location is the cytoplasm. It carries out the reaction tRNA(Pro) + L-proline + ATP = L-prolyl-tRNA(Pro) + AMP + diphosphate. Its function is as follows. Catalyzes the attachment of proline to tRNA(Pro) in a two-step reaction: proline is first activated by ATP to form Pro-AMP and then transferred to the acceptor end of tRNA(Pro). As ProRS can inadvertently accommodate and process non-cognate amino acids such as alanine and cysteine, to avoid such errors it has two additional distinct editing activities against alanine. One activity is designated as 'pretransfer' editing and involves the tRNA(Pro)-independent hydrolysis of activated Ala-AMP. The other activity is designated 'posttransfer' editing and involves deacylation of mischarged Ala-tRNA(Pro). The misacylated Cys-tRNA(Pro) is not edited by ProRS. This is Proline--tRNA ligase from Shewanella loihica (strain ATCC BAA-1088 / PV-4).